We begin with the raw amino-acid sequence, 647 residues long: Exoribonuclease 2 (647 aa).

Positions 192 to 520 constitute an RNB domain; that stretch reads REDLTALSFV…NHRLLKAIIS (329 aa). An S1 motif domain is found at 565–647; sequence ESTFNAEIID…ETRNIVARPI (83 aa).

Belongs to the RNR ribonuclease family. RNase II subfamily.

Its subcellular location is the cytoplasm. It catalyses the reaction Exonucleolytic cleavage in the 3'- to 5'-direction to yield nucleoside 5'-phosphates.. Its function is as follows. Involved in mRNA degradation. Hydrolyzes single-stranded polyribonucleotides processively in the 3' to 5' direction. This is Exoribonuclease 2 from Proteus mirabilis (strain HI4320).